A 149-amino-acid polypeptide reads, in one-letter code: 3-dehydroquinate dehydratase (149 aa).

The active-site Proton acceptor is Tyr26. Substrate contacts are provided by Asn77, His83, and Asp90. His103 functions as the Proton donor in the catalytic mechanism. Substrate contacts are provided by residues 104–105 and Arg114; that span reads LS.

The protein belongs to the type-II 3-dehydroquinase family. In terms of assembly, homododecamer.

It carries out the reaction 3-dehydroquinate = 3-dehydroshikimate + H2O. The protein operates within metabolic intermediate biosynthesis; chorismate biosynthesis; chorismate from D-erythrose 4-phosphate and phosphoenolpyruvate: step 3/7. Functionally, catalyzes a trans-dehydration via an enolate intermediate. The chain is 3-dehydroquinate dehydratase from Aliivibrio salmonicida (strain LFI1238) (Vibrio salmonicida (strain LFI1238)).